The following is a 361-amino-acid chain: UDP-3-O-acylglucosamine N-acyltransferase (361 aa).

Catalysis depends on H253, which acts as the Proton acceptor.

Belongs to the transferase hexapeptide repeat family. LpxD subfamily. In terms of assembly, homotrimer.

It catalyses the reaction a UDP-3-O-[(3R)-3-hydroxyacyl]-alpha-D-glucosamine + a (3R)-hydroxyacyl-[ACP] = a UDP-2-N,3-O-bis[(3R)-3-hydroxyacyl]-alpha-D-glucosamine + holo-[ACP] + H(+). Its pathway is bacterial outer membrane biogenesis; LPS lipid A biosynthesis. In terms of biological role, catalyzes the N-acylation of UDP-3-O-acylglucosamine using 3-hydroxyacyl-ACP as the acyl donor. Is involved in the biosynthesis of lipid A, a phosphorylated glycolipid that anchors the lipopolysaccharide to the outer membrane of the cell. The protein is UDP-3-O-acylglucosamine N-acyltransferase of Burkholderia pseudomallei (strain 1710b).